The chain runs to 264 residues: Glutamate racemase (264 aa).

Substrate is bound by residues 10–11 (DS) and 42–43 (YG). The Proton donor/acceptor role is filled by Cys73. 74–75 (NT) lines the substrate pocket. Cys183 functions as the Proton donor/acceptor in the catalytic mechanism. 184 to 185 (TH) contacts substrate.

This sequence belongs to the aspartate/glutamate racemases family.

The enzyme catalyses L-glutamate = D-glutamate. It functions in the pathway cell wall biogenesis; peptidoglycan biosynthesis. Provides the (R)-glutamate required for cell wall biosynthesis. This Streptococcus pyogenes serotype M6 (strain ATCC BAA-946 / MGAS10394) protein is Glutamate racemase.